The following is a 693-amino-acid chain: Elongation factor G (693 aa).

Residues 8–283 enclose the tr-type G domain; that stretch reads NRIRNIGIAA…AVIDYLPAPT (276 aa). GTP is bound by residues 17–24, 81–85, and 135–138; these read AHIDAGKT, DTPGH, and NKMD.

The protein belongs to the TRAFAC class translation factor GTPase superfamily. Classic translation factor GTPase family. EF-G/EF-2 subfamily.

The protein localises to the cytoplasm. In terms of biological role, catalyzes the GTP-dependent ribosomal translocation step during translation elongation. During this step, the ribosome changes from the pre-translocational (PRE) to the post-translocational (POST) state as the newly formed A-site-bound peptidyl-tRNA and P-site-bound deacylated tRNA move to the P and E sites, respectively. Catalyzes the coordinated movement of the two tRNA molecules, the mRNA and conformational changes in the ribosome. This Wolinella succinogenes (strain ATCC 29543 / DSM 1740 / CCUG 13145 / JCM 31913 / LMG 7466 / NCTC 11488 / FDC 602W) (Vibrio succinogenes) protein is Elongation factor G.